A 784-amino-acid polypeptide reads, in one-letter code: ent-copalyl diphosphate synthase 2, chloroplastic (784 aa).

The transit peptide at 1 to 57 (MSMTLFASVTRPGLPGPTALRFPETRHLFHSVTAFAASFSPSKSSVGSSQCNATTPP) directs the protein to the chloroplast. K242 lines the substrate pocket. Positions 379 and 381 each coordinate Mg(2+). The DXDD motif signature appears at 379 to 382 (DIDD). K466 is a binding site for substrate.

The protein belongs to the terpene synthase family. Mg(2+) is required as a cofactor. In terms of tissue distribution, present in both leaves and flowers.

Its subcellular location is the plastid. The protein resides in the chloroplast. It functions in the pathway plant hormone biosynthesis; gibberellin biosynthesis. The protein operates within secondary metabolite biosynthesis; terpenoid biosynthesis. Involved in the biosynthesis of labdane-type diterpenoid including marrubiin and other labdane-related furanoid diterpenoids with potential applications as anti-diabetics, analgesics or vasorelaxants. May be involved in the conversion of geranylgeranyl diphosphate (GGPP) to ent-copalyl diphosphate (ent-CPP) and 8-hydroxycopalyl diphosphate (LPP, labda-13-en-8-ol diphosphate). The sequence is that of ent-copalyl diphosphate synthase 2, chloroplastic from Marrubium vulgare (White horehound).